The sequence spans 358 residues: Fructose-bisphosphate aldolase 7, cytosolic (358 aa).

Ser2 is subject to N-acetylserine. Arg52 provides a ligand contact to substrate. An S-glutathionyl cysteine; transient modification is found at Cys68. Lys142 serves as a coordination point for substrate. Cys173 is modified (S-glutathionyl cysteine; transient; alternate). S-nitrosocysteine; transient; alternate is present on Cys173. Glu183 acts as the Proton acceptor in catalysis. Lys225 acts as the Schiff-base intermediate with dihydroxyacetone-P in catalysis. Substrate is bound at residue 266–268 (SGI).

It belongs to the class I fructose-bisphosphate aldolase family. As to quaternary structure, homotetramer. S-glutathionylated at Cys-68 and Cys-173. Post-translationally, S-nitrosylated at Cys-173. Highly expressed in flowers, and at lower levels in rosettes leaves and cauline leaves.

It localises to the cytoplasm. Its subcellular location is the cytosol. It catalyses the reaction beta-D-fructose 1,6-bisphosphate = D-glyceraldehyde 3-phosphate + dihydroxyacetone phosphate. The protein operates within carbohydrate degradation; glycolysis; D-glyceraldehyde 3-phosphate and glycerone phosphate from D-glucose: step 4/4. In terms of biological role, plays a key role in glycolysis and gluconeogenesis. In Arabidopsis thaliana (Mouse-ear cress), this protein is Fructose-bisphosphate aldolase 7, cytosolic.